A 1937-amino-acid polypeptide reads, in one-letter code: Myosin-2 (1937 aa).

The Myosin N-terminal SH3-like domain occupies 33 to 82 (DAKTSVFVAEPKESFVKGTIQSREGGKVTVKTDAGATLTVKEDQVFPMNP). Phosphothreonine is present on residues Thr64 and Thr69. The Myosin motor domain maps to 86 to 780 (DKIEDMAMMT…LLGLLEEMRD (695 aa)). Lys130 carries the post-translational modification N6,N6,N6-trimethyllysine. 179 to 186 (GESGAGKT) lines the ATP pocket. A Phosphotyrosine modification is found at Tyr387. The residue at position 417 (Thr417) is a Phosphothreonine. A Phosphoserine modification is found at Ser623. Residues 657–679 (LNKLMTNLRSTHPHFVRCIIPNE) are actin-binding. Residue His755 is modified to Pros-methylhistidine. Positions 759-773 (KFGHTKVFFKAGLLG) are actin-binding. Residues 783 to 812 (LAQIITRTQARCRGFLARVEYQKMVERRES) form the IQ domain. Residues 841–1937 (LLKSAETEKE…EVHTKIISEE (1097 aa)) adopt a coiled-coil conformation. Ser1094 carries the phosphoserine modification. 2 disordered regions span residues 1124 to 1145 (IEAERASRAKAEKQRSDLSREL) and 1151 to 1170 (RLEEAGGATSAQIEMNKKRE). Basic and acidic residues predominate over residues 1126-1145 (AERASRAKAEKQRSDLSREL). Ser1160 and Ser1235 each carry phosphoserine. Position 1239 is a phosphothreonine (Thr1239). Ser1241 is modified (phosphoserine). Thr1253 is modified (phosphothreonine). Ser1259 carries the post-translational modification Phosphoserine. Thr1284 carries the phosphothreonine modification. Phosphoserine occurs at positions 1290, 1301, and 1304. Tyr1462 is modified (phosphotyrosine). Thr1465 bears the Phosphothreonine mark. Phosphoserine is present on Ser1472. Phosphotyrosine is present on Tyr1490. Ser1493 bears the Phosphoserine mark. Thr1499 bears the Phosphothreonine mark. Phosphoserine is present on Ser1512. Position 1515 is a phosphothreonine (Thr1515). Phosphoserine is present on residues Ser1540, Ser1552, Ser1572, Ser1712, and Ser1724. A phosphothreonine mark is found at Thr1728 and Thr1734. Position 1737 is a phosphoserine (Ser1737). Positions 1883 to 1913 (QAEEAEEQSNTNLSKFRKLQHELEEAEERAD) are disordered.

Belongs to the TRAFAC class myosin-kinesin ATPase superfamily. Myosin family. In terms of assembly, muscle myosin is a hexameric protein that consists of 2 heavy chain subunits (MHC), 2 alkali light chain subunits (MLC) and 2 regulatory light chain subunits (MLC-2). Interacts with GCSAM.

The protein localises to the cytoplasm. Its subcellular location is the myofibril. In terms of biological role, myosins are actin-based motor molecules with ATPase activity essential for muscle contraction. This is Myosin-2 (MYH2) from Equus caballus (Horse).